A 162-amino-acid polypeptide reads, in one-letter code: MGLESEKADVQLFMDDDAYSRHSGVDFVEAEKFSASGPDRDPHRLNSHLQLGFQDVIAEPETTHSFDKVWICSHALFEISKYVLYKFLTFFLAIPLAFAAGILFAILSCLHIWIIMPFVKTCLMVLPSVQTIWKSVTDVVIAPLCTSVGRSFSSVSLQLSQD.

Residues 1–86 (MGLESEKADV…FEISKYVLYK (86 aa)) are Cytoplasmic-facing. Y19 carries the phosphotyrosine modification. Residues S20, S23, and S36 each carry the phosphoserine modification. The helical intramembrane region spans 87-107 (FLTFFLAIPLAFAAGILFAIL). Residues 108 to 162 (SCLHIWIIMPFVKTCLMVLPSVQTIWKSVTDVVIAPLCTSVGRSFSSVSLQLSQD) lie on the Cytoplasmic side of the membrane.

Belongs to the caveolin family. Monomer or homodimer. Interacts with CAV1; the interaction forms a stable heterooligomeric complex that is required for targeting to lipid rafts and for caveolae formation. Tyrosine phosphorylated forms do not form heterooligomers with the Tyr-19-phosphorylated form existing as a monomer or dimer. Interacts (tyrosine phosphorylated form) with the SH2 domain-containing proteins, RASA1, NCK1 and SRC. Interacts (tyrosine phosphorylated form) with INSR. Interacts (Tyr-19 phosphorylated form) with MAPK1 (phosphorylated form); the interaction, promoted by insulin, leads to nuclear location and MAPK1 activation. Interacts with STAT3; the interaction is increased on insulin-induced tyrosine phosphorylation leading to STAT activation. Phosphorylated on serine and tyrosine residues. CAV1 promotes phosphorylation on Ser-23 which then targets the complex to the plasma membrane, lipid rafts and caveolae. Phosphorylation on Ser-36 appears to modulate mitosis in endothelial cells. Phosphorylation on Tyr-19 is required for insulin-induced phosphorylation of MAPK1 and DNA binding of STAT3. Tyrosine phosphorylation is induced by both EGF and insulin.

The protein resides in the nucleus. It localises to the golgi apparatus membrane. Its subcellular location is the cell membrane. The protein localises to the membrane. It is found in the caveola. Its function is as follows. May act as a scaffolding protein within caveolar membranes. Interacts directly with G-protein alpha subunits and can functionally regulate their activity. Acts as an accessory protein in conjunction with CAV1 in targeting to lipid rafts and driving caveolae formation. The Ser-36 phosphorylated form has a role in modulating mitosis in endothelial cells. Positive regulator of cellular mitogenesis of the MAPK signaling pathway. Required for the insulin-stimulated nuclear translocation and activation of MAPK1 and STAT3, and the subsequent regulation of cell cycle progression. The polypeptide is Caveolin-2 (CAV2) (Echinops telfairi (Lesser hedgehog tenrec)).